Here is a 500-residue protein sequence, read N- to C-terminus: Cytochrome P450 81F1 (500 aa).

A helical membrane pass occupies residues 1–21 (MLYFILLPLLFLVISYKFLYS). Residue Lys248 forms a Glycyl lysine isopeptide (Lys-Gly) (interchain with G-Cter in ubiquitin) linkage. A heme-binding site is contributed by Cys438.

This sequence belongs to the cytochrome P450 family. It depends on heme as a cofactor.

The protein resides in the membrane. It participates in secondary metabolite biosynthesis. Its function is as follows. Involved in indole glucosinolate biosynthesis. Catalyzes hydroxylation reactions of the glucosinolate indole ring. Converts indol-3-yl-methylglucosinolate (I3M) to 4-hydroxy-indol-3-yl-methylglucosinolate (4OH-I3M) and/or 1-hydroxy-indol-3-yl-methylglucosinolate (1OH-I3M) intermediates. These hydroxy intermediates are converted to 4-methoxy-indol-3-yl-methylglucosinolate (4MO-I3M) and 1-methoxy-indol-3-yl-methylglucosinolate (1MO-I3M) by indole glucosinolate methyltransferase 1 and 2 (IGMT1 and IGMT2). In Arabidopsis thaliana (Mouse-ear cress), this protein is Cytochrome P450 81F1.